Reading from the N-terminus, the 397-residue chain is UDP-GlcNAc:betaGal beta-1,3-N-acetylglucosaminyltransferase 8 (397 aa).

Residues 1 to 6 (MRCPKC) are Cytoplasmic-facing. Residues 7–23 (LLCLSALLTLLGLKVYI) traverse the membrane as a helical; Signal-anchor for type II membrane protein segment. The Lumenal segment spans residues 24-397 (EWTSESRLSK…KQLQDPRLQC (374 aa)). The interval 33–58 (KAYPSPRGTPPSPTPANPEPTLPANL) is disordered. Residues 39 to 53 (RGTPPSPTPANPEPT) show a composition bias toward pro residues. The N-linked (GlcNAc...) asparagine glycan is linked to N57.

Belongs to the glycosyltransferase 31 family. As to quaternary structure, interacts with B3GNT2; this interaction greatly increases B3GNT2 catalytic activity, independently of B3GNT8 enzymatic activity. As to expression, highly expressed in small intestine, pancreas, spleen, bone marrow, lung, throat, and ileum, and weakly in fetal brain, cerebellum, heart, liver, tongue, breast, uteri, and testis. Not detected in colon. Differentially expressed in human tumor cell lines.

Its subcellular location is the golgi apparatus membrane. It participates in protein modification; protein glycosylation. Functionally, beta-1,3-N-acetylglucosaminyltransferase that plays a role in the elongation of specific branch structures of multiantennary N-glycans. Has strong activity towards tetraantennary N-glycans and 2,6 triantennary glycans. In Homo sapiens (Human), this protein is UDP-GlcNAc:betaGal beta-1,3-N-acetylglucosaminyltransferase 8.